Here is a 349-residue protein sequence, read N- to C-terminus: Ferredoxin--NADP reductase (349 aa).

FAD-binding residues include aspartate 43, glutamine 51, tyrosine 56, valine 96, phenylalanine 131, aspartate 295, and serine 336.

This sequence belongs to the ferredoxin--NADP reductase type 2 family. As to quaternary structure, homodimer. FAD is required as a cofactor.

It carries out the reaction 2 reduced [2Fe-2S]-[ferredoxin] + NADP(+) + H(+) = 2 oxidized [2Fe-2S]-[ferredoxin] + NADPH. This chain is Ferredoxin--NADP reductase, found in Paraburkholderia phytofirmans (strain DSM 17436 / LMG 22146 / PsJN) (Burkholderia phytofirmans).